The primary structure comprises 171 residues: MLSKKQEFLEKKIEQRHGTKNKPAALQALKRKKRYEKQLAQIDGTLSTIEFQQQALENANTNTEVLKNMGSAAKAKKAAHDNMDIDKVDELMQDIADQQELGEEISTAISKPVGFGEKSDEDELMAELEELEQEEPDKNLLEVSGPETVPLPNVPSIALPSKPAKKRKTTT.

Residues 1–17 (MLSKKQEFLEKKIEQRH) show a composition bias toward basic and acidic residues. Disordered stretches follow at residues 1 to 24 (MLSKKQEFLEKKIEQRHGTKNKPA) and 132 to 171 (EQEEPDKNLLEVSGPETVPLPNVPSIALPSKPAKKRKTTT).

This sequence belongs to the SNF7 family.

In Homo sapiens (Human), this protein is Putative charged multivesicular body protein 4B-like protein CHMP4BP1 (CHMP4BP1).